A 1017-amino-acid chain; its full sequence is NLR family CARD domain-containing protein 4 (1017 aa).

In terms of domain architecture, CARD spans 1–88; that stretch reads MNFIKENSQV…PLFQELHGLS (88 aa). Residues 95–298 are nucleotide-binding domain (NBD); it reads EEDLDDLAQE…QFGALIAEVG (204 aa). The 314-residue stretch at 163–476 folds into the NACHT domain; the sequence is SPCIIEGESG…VTKGNGHLQK (314 aa). Residue 169 to 176 coordinates ATP; that stretch reads GESGKGKS. Residues 356–463 are winged-helix domain (WHD); it reads SHTQTTLFCT…RLSSLLTSGE (108 aa). Ser-533 carries the phosphoserine modification. LRR repeat units follow at residues 578-598, 649-672, 728-751, 755-778, 780-805, 817-840, 841-863, 871-895, 904-926, 929-956, 958-978, and 992-1014; these read FFRG…LFDF, KQEF…DIKY, VTNL…LTDN, LKNL…KLAE, LTNL…DYIV, EIQL…LHNL, ARLS…ALQQ, LEQL…LLEQ, KLGL…FFEK, LENF…GFEN, KELV…SLVR, and EVQL…AFKL.

Homooligomer; homooligomerizes following activation of Naip proteins by pathogenic proteins such as S.typhimurium (Salmonella) flagellin or PrgJ. Component of the NLRC4 inflammasome, at least composed of NLRC4, caspase-1 (CASP1) and some NAIP family member. Interacts with EIF2AK2/PKR. Post-translationally, phosphorylated at Ser-533 following infection of macrophages with S.typhimurium (Salmonella). Phosphorylation is essential for NLRC4 inflammasome function to promote caspase-1 activation and pyroptosis. PRKCD phosphorylates Ser-533 in vitro.

Its subcellular location is the cytoplasm. The protein localises to the cytosol. Functionally, key component of inflammasomes that indirectly senses specific proteins from pathogenic bacteria and fungi and responds by assembling an inflammasome complex that promotes caspase-1 activation, cytokine production and macrophage pyroptosis. The NLRC4 inflammasome is activated as part of the innate immune response to a range of intracellular bacteria. This chain is NLR family CARD domain-containing protein 4 (NLRC4), found in Bos taurus (Bovine).